The chain runs to 391 residues: Multidrug resistance protein MdtL (391 aa).

The next 12 membrane-spanning stretches (helical) occupy residues 4-24 (FLICSFALVLLYPAGIDMYLV), 42-62 (IAFSVYLAGMAAAMLFAGKVA), 69-89 (PVAIPGAALFIIASVFCSLAE), 93-113 (LFLAGRFLQGLGAGCCYVVAF), 131-151 (LLNGITCIIPVLAPVLGHLIM), 158-178 (SLFWTMATMGIAVLMLSLFIL), 203-222 (FFLSRVVITTLSVSVILTFV), 245-265 (ALTAGVSMTVSFSTPFALGIF), 269-289 (TLMITSQVLFLAAGITLAVSP), 293-313 (VSLFGITLICAGFSVGFGVAM), 331-351 (LGIAQVCGSSLWIWLAAVVGI), and 356-376 (MLIGILIACSIVSLLLIMFVA).

The protein belongs to the major facilitator superfamily. DHA1 family. MdtL (TC 2.A.1.2.22) subfamily.

The protein localises to the cell inner membrane. Confers resistance to chloramphenicol. This Escherichia coli O127:H6 (strain E2348/69 / EPEC) protein is Multidrug resistance protein MdtL.